The primary structure comprises 730 residues: ABC transporter G family member 20 (730 aa).

One can recognise an ABC transporter domain in the interval 15–244 (ISLKNVCRGY…YESQTLEEVF (230 aa)). 47 to 54 (GASGSGKT) is a binding site for ATP. The segment at 281 to 303 (VNNNNNNNNNNNNNNYNNNDDEE) is disordered. Over residues 282 to 298 (NNNNNNNNNNNNNNYNN) the composition is skewed to low complexity. One can recognise an ABC transmembrane type-2 domain in the interval 489–717 (SFETLAKQQA…FIAVLALNEK (229 aa)). A run of 5 helical transmembrane segments spans residues 520 to 540 (FIDF…AISI), 572 to 592 (FLGH…IAIY), 602 to 622 (IALV…LGLV), 634 to 654 (IQLS…LWPL), and 692 to 712 (VWVA…IAVL).

Belongs to the ABC transporter superfamily.

The protein localises to the membrane. The chain is ABC transporter G family member 20 (abcG20) from Dictyostelium discoideum (Social amoeba).